The chain runs to 478 residues: MFPDSSYLFSMRSLSRFLIAIFGCGALLASCDSFERSVLPFDKTDELVVITVNSPDTYYENAEGSYAGLDYDLATEFAKELGMKVRFKTVPRLDKAWSLLEKHKGHFAAGMNISAKHSRHVAFGPIYQLVQPQLAYNTDYNKPKNLHQLGGRTIRIAKGVTHAEQLNKAKHEVPELKWKEMDLTPDELLARLAEGKVDYVVADSTQINLAKNFYPNLNAAFNLGDSVGRAWAFSPFAEQALLEATQKFFTRIQQDGTLTRLLDRYYGHIERLHHTDVNGILAKRRTILPELREHFYEAEELSGIDWRLIAALAYQESHWDALATSPSNVRGIMMLTEITADRMKVTDRLDARQSILAGARYFALLKDKLPTRIKEPDRTWMALAAYNQGPSHLEDARILAQKMGLSPDAWVDLKKTLPLLSQSEHFRTLRHGFARGGQAVVLAESVRIYYEILQKYEPPYSWGFPIVARKEDDSWQEF.

Positions 1 to 29 (MFPDSSYLFSMRSLSRFLIAIFGCGALLA) are cleaved as a signal peptide. The non-LT domain stretch occupies residues 30–269 (SCDSFERSVL…RLLDRYYGHI (240 aa)). Residues 271–478 (RLHHTDVNGI…RKEDDSWQEF (208 aa)) form an LT domain region. Residue glutamate 316 is part of the active site.

The protein in the N-terminal section; belongs to the bacterial solute-binding protein 3 family. In the C-terminal section; belongs to the transglycosylase Slt family.

Its subcellular location is the cell outer membrane. The enzyme catalyses Exolytic cleavage of the (1-&gt;4)-beta-glycosidic linkage between N-acetylmuramic acid (MurNAc) and N-acetylglucosamine (GlcNAc) residues in peptidoglycan, from either the reducing or the non-reducing ends of the peptidoglycan chains, with concomitant formation of a 1,6-anhydrobond in the MurNAc residue.. In terms of biological role, murein-degrading enzyme that degrades murein glycan strands and insoluble, high-molecular weight murein sacculi, with the concomitant formation of a 1,6-anhydromuramoyl product. Lytic transglycosylases (LTs) play an integral role in the metabolism of the peptidoglycan (PG) sacculus. Their lytic action creates space within the PG sacculus to allow for its expansion as well as for the insertion of various structures such as secretion systems and flagella. In Nitrosospira multiformis (strain ATCC 25196 / NCIMB 11849 / C 71), this protein is Membrane-bound lytic murein transglycosylase F.